A 224-amino-acid chain; its full sequence is UPF0758 protein CJA_3522 (224 aa).

The MPN domain occupies 102-224; it reads LLSSPHLVRD…LVSLAERGWL (123 aa). The Zn(2+) site is built by histidine 173, histidine 175, and aspartate 186. The JAMM motif motif lies at 173–186; sequence HNHPSGLAEPSQAD.

The protein belongs to the UPF0758 family.

The protein is UPF0758 protein CJA_3522 of Cellvibrio japonicus (strain Ueda107) (Pseudomonas fluorescens subsp. cellulosa).